A 399-amino-acid polypeptide reads, in one-letter code: Dual-specificity RNA methyltransferase RlmN (399 aa).

The active-site Proton acceptor is Glu116. The region spanning 122 to 352 (SEDRLTLCIS…VLLRRSMGRD (231 aa)) is the Radical SAM core domain. Cys129 and Cys357 form a disulfide bridge. Cys136, Cys140, and Cys143 together coordinate [4Fe-4S] cluster. S-adenosyl-L-methionine contacts are provided by residues 185-186 (GE), Ser217, 238-240 (SLN), and Asn314. Cys357 functions as the S-methylcysteine intermediate in the catalytic mechanism.

This sequence belongs to the radical SAM superfamily. RlmN family. [4Fe-4S] cluster serves as cofactor.

The protein resides in the cytoplasm. The catalysed reaction is adenosine(2503) in 23S rRNA + 2 reduced [2Fe-2S]-[ferredoxin] + 2 S-adenosyl-L-methionine = 2-methyladenosine(2503) in 23S rRNA + 5'-deoxyadenosine + L-methionine + 2 oxidized [2Fe-2S]-[ferredoxin] + S-adenosyl-L-homocysteine. The enzyme catalyses adenosine(37) in tRNA + 2 reduced [2Fe-2S]-[ferredoxin] + 2 S-adenosyl-L-methionine = 2-methyladenosine(37) in tRNA + 5'-deoxyadenosine + L-methionine + 2 oxidized [2Fe-2S]-[ferredoxin] + S-adenosyl-L-homocysteine. In terms of biological role, specifically methylates position 2 of adenine 2503 in 23S rRNA and position 2 of adenine 37 in tRNAs. m2A2503 modification seems to play a crucial role in the proofreading step occurring at the peptidyl transferase center and thus would serve to optimize ribosomal fidelity. The polypeptide is Dual-specificity RNA methyltransferase RlmN (Bdellovibrio bacteriovorus (strain ATCC 15356 / DSM 50701 / NCIMB 9529 / HD100)).